We begin with the raw amino-acid sequence, 928 residues long: Inner tegument protein (928 aa).

The interaction with large tegument protein stretch occupies residues 482 to 928 (WGGAVPANLA…LAGLRKLFVE (447 aa)).

This sequence belongs to the herpesviridae inner tegument protein family. As to quaternary structure, interacts (via C-terminus) with the large tegument protein/LTP (via N-terminus).

It localises to the virion tegument. Its subcellular location is the host cytoplasm. The protein localises to the host nucleus. It is found in the host Golgi apparatus. The protein resides in the host trans-Golgi network. Its function is as follows. Plays an essential role in cytoplasmic secondary envelopment during viral egress. Interacts with the capsid via the large tegument protein/LTP and participates in its transport to the host trans-Golgi network (TGN) where secondary envelopment occurs. Modulates tegumentation and capsid accumulation at the viral assembly complex. The chain is Inner tegument protein (ORF63) from Homo sapiens (Human).